The sequence spans 164 residues: Protein HIT1 (164 aa).

Positions 8, 11, 28, and 32 each coordinate Zn(2+). Residues 8–49 (CGICRGVDGKYKCPKCGVRYCSLKCYKDAAKHVHKESEQPRA) form an HIT-type; degenerate zinc finger.

The polypeptide is Protein HIT1 (HIT1) (Saccharomyces cerevisiae (strain ATCC 204508 / S288c) (Baker's yeast)).